The chain runs to 335 residues: Cytochrome c biogenesis protein CcsA (335 aa).

8 helical membrane-spanning segments follow: residues Phe-15–Thr-35, Trp-36–Leu-56, Leu-68–Val-88, Leu-97–Leu-117, Val-142–Val-162, Ile-243–Asn-263, Trp-278–Trp-298, and Ala-304–Leu-324.

Belongs to the CcmF/CycK/Ccl1/NrfE/CcsA family. May interact with ccs1.

It is found in the cellular thylakoid membrane. Required during biogenesis of c-type cytochromes (cytochrome c6 and cytochrome f) at the step of heme attachment. This chain is Cytochrome c biogenesis protein CcsA, found in Crocosphaera subtropica (strain ATCC 51142 / BH68) (Cyanothece sp. (strain ATCC 51142)).